We begin with the raw amino-acid sequence, 660 residues long: MKSSKLFALAGVTLLAATTLAACSGSGSSTKGEKTFSYIYETDPDNLNYLTTAKAATANITSNVVDGLLENDRYGNFVPSMAEDWSVSKDGLTYTYTIRKDAKWYTSEGEEYAAVKAQDFVTGLKYAADKKSDALYLVQESIKGLDAYVKGEIKDFSQVGIKALDEQTVQYTLNKPESFWNSKTTMGVLAPVNEEFLNSKGDDFAKATDPSSLLYNGPYLLKSIVTKSSVEFAKNPNYWDKDNVHVDKVKLSFWDGQDTSKPAENFKDGSLTAARLYPTSASFAELEKSMKDNIVYTQQDSITYLVGTNIDRQSYKYTSKTSDEQKASTKKALLNKDFRQAIAFGFDRTAYASQLNGQTGASKILRNLFVPPTFVQADGKNFGDMVKEKLVTYGDEWKDVNLADSQDGLYNPEKAKAEFAKAKSALQAEGVQFPIHLDMPVDQTATTKVQRVQSMKQSLEATLGADNVIIDIQQLQKDEVNNITYFAENAAGEDWDLSDNVGWGPDFADPSTYLDIIKPSVGESTKTYLGFDSGEDNVAAKKVGLYDYEKLVTEAGDETTDVAKRYDKYAAAQAWLTDSALIIPTTSRTGRPILSKMVPFTIPFALSGNKGTSEPVLYKYLELQDKAVTVDEYQKAQEKWMKEKEESNKKAQEDLAKHVK.

Positions 1-22 are cleaved as a signal peptide; the sequence is MKSSKLFALAGVTLLAATTLAA. The N-palmitoyl cysteine moiety is linked to residue cysteine 23. Cysteine 23 carries the S-diacylglycerol cysteine lipid modification. The interval 638–660 is disordered; the sequence is EKWMKEKEESNKKAQEDLAKHVK.

It belongs to the bacterial solute-binding protein 5 family.

The protein resides in the cell membrane. Functionally, part of the binding-protein-dependent transport system for oligopeptides; probably an oligopeptide binding protein. In Streptococcus pneumoniae serotype 4 (strain ATCC BAA-334 / TIGR4), this protein is Oligopeptide-binding protein AliA (aliA).